The following is a 143-amino-acid chain: Papain inhibitor (143 aa).

Residues 1–33 (MREFRRVRRVRFAACALVAAATGITLAAGPASA) form the signal peptide.

In terms of assembly, monomer.

The protein localises to the secreted. In terms of biological role, stress protein produced under hyperthermal stress conditions. Serves as a glutamine and lysine donor substrate for transglutaminase. Inhibits the cysteine proteases papain and bromelain as well as the bovine serine protease trypsin. Has hardly any or no effect on subtilisin, bovine chymotrypsin, proteinase K from T.album, transglutaminase-activating metalloproteinase (TAMEP) from S.mobaraensis, dispase from B.polymyxa, thermolysin from B.thermoproteolyticus or collagenase from C.histolyticum. The polypeptide is Papain inhibitor (pi) (Streptomyces mobaraensis (Streptoverticillium mobaraense)).